We begin with the raw amino-acid sequence, 568 residues long: Oxygen-dependent choline dehydrogenase (568 aa).

8–37 is a binding site for FAD; the sequence is DYIIIGAGSAGNTLAARLTEDAGVTVLLLE. Residue H477 is the Proton acceptor of the active site.

Belongs to the GMC oxidoreductase family. Requires FAD as cofactor.

It carries out the reaction choline + A = betaine aldehyde + AH2. The catalysed reaction is betaine aldehyde + NAD(+) + H2O = glycine betaine + NADH + 2 H(+). It functions in the pathway amine and polyamine biosynthesis; betaine biosynthesis via choline pathway; betaine aldehyde from choline (cytochrome c reductase route): step 1/1. In terms of biological role, involved in the biosynthesis of the osmoprotectant glycine betaine. Catalyzes the oxidation of choline to betaine aldehyde and betaine aldehyde to glycine betaine at the same rate. This is Oxygen-dependent choline dehydrogenase from Pseudomonas syringae pv. syringae (strain B728a).